Consider the following 463-residue polypeptide: Phosphomannomutase (463 aa).

S103 acts as the Phosphoserine intermediate in catalysis. The Mg(2+) site is built by S103, D248, D250, and D252.

This sequence belongs to the phosphohexose mutase family. Mg(2+) serves as cofactor.

The protein localises to the cell membrane. It catalyses the reaction alpha-D-mannose 1-phosphate = D-mannose 6-phosphate. It participates in nucleotide-sugar biosynthesis; GDP-alpha-D-mannose biosynthesis; alpha-D-mannose 1-phosphate from D-fructose 6-phosphate: step 2/2. Its pathway is bacterial outer membrane biogenesis; LPS O-antigen biosynthesis. Its function is as follows. Involved in GDP-mannose biosynthesis which serves as the activated sugar nucleotide precursor for mannose residues in cell surface polysaccharides. The chain is Phosphomannomutase (rfbB) from Vibrio cholerae serotype O1 (strain ATCC 39315 / El Tor Inaba N16961).